Reading from the N-terminus, the 203-residue chain is Outer-membrane lipoprotein carrier protein (203 aa).

A signal peptide spans 1–21 (MKKLAITCALLSGMVVSQVWA).

It belongs to the LolA family. Monomer.

The protein localises to the periplasm. Participates in the translocation of lipoproteins from the inner membrane to the outer membrane. Only forms a complex with a lipoprotein if the residue after the N-terminal Cys is not an aspartate (The Asp acts as a targeting signal to indicate that the lipoprotein should stay in the inner membrane). In Klebsiella pneumoniae subsp. pneumoniae (strain ATCC 700721 / MGH 78578), this protein is Outer-membrane lipoprotein carrier protein.